Reading from the N-terminus, the 181-residue chain is Acireductone dioxygenase (181 aa).

Residues His98, His100, Glu104, and His142 each contribute to the Fe(2+) site. Residues His98, His100, Glu104, and His142 each coordinate Ni(2+).

Belongs to the acireductone dioxygenase (ARD) family. As to quaternary structure, monomer. The cofactor is Fe(2+). Ni(2+) serves as cofactor.

The catalysed reaction is 1,2-dihydroxy-5-(methylsulfanyl)pent-1-en-3-one + O2 = 3-(methylsulfanyl)propanoate + CO + formate + 2 H(+). The enzyme catalyses 1,2-dihydroxy-5-(methylsulfanyl)pent-1-en-3-one + O2 = 4-methylsulfanyl-2-oxobutanoate + formate + 2 H(+). The protein operates within amino-acid biosynthesis; L-methionine biosynthesis via salvage pathway; L-methionine from S-methyl-5-thio-alpha-D-ribose 1-phosphate: step 5/6. In terms of biological role, catalyzes 2 different reactions between oxygen and the acireductone 1,2-dihydroxy-3-keto-5-methylthiopentene (DHK-MTPene) depending upon the metal bound in the active site. Fe-containing acireductone dioxygenase (Fe-ARD) produces formate and 2-keto-4-methylthiobutyrate (KMTB), the alpha-ketoacid precursor of methionine in the methionine recycle pathway. Ni-containing acireductone dioxygenase (Ni-ARD) produces methylthiopropionate, carbon monoxide and formate, and does not lie on the methionine recycle pathway. The chain is Acireductone dioxygenase from Alcanivorax borkumensis (strain ATCC 700651 / DSM 11573 / NCIMB 13689 / SK2).